Here is a 521-residue protein sequence, read N- to C-terminus: Glucose-6-phosphate isomerase (521 aa).

E327 serves as the catalytic Proton donor. Active-site residues include H358 and K486.

The protein belongs to the GPI family.

Its subcellular location is the cytoplasm. It carries out the reaction alpha-D-glucose 6-phosphate = beta-D-fructose 6-phosphate. Its pathway is carbohydrate biosynthesis; gluconeogenesis. It participates in carbohydrate degradation; glycolysis; D-glyceraldehyde 3-phosphate and glycerone phosphate from D-glucose: step 2/4. In terms of biological role, catalyzes the reversible isomerization of glucose-6-phosphate to fructose-6-phosphate. The polypeptide is Glucose-6-phosphate isomerase (Bordetella bronchiseptica (strain ATCC BAA-588 / NCTC 13252 / RB50) (Alcaligenes bronchisepticus)).